Here is a 132-residue protein sequence, read N- to C-terminus: MVILYTAPSCTSCRKAKAWLQTHDIDFQEHNLFTEPLSIEKIKQILQLTESGTEEIISTRSKAFQQLNVDINDLSLNELFDMITHDPSLLRRPIMLDEKRLQVGYNEDEIRRFLPRKIRTLELLRAQQLANM.

A disulfide bond links Cys-10 and Cys-13.

It belongs to the ArsC family. Spx subfamily. In terms of assembly, interacts with the C-terminal domain of the alpha subunit of the RNAP.

It is found in the cytoplasm. Its function is as follows. Global transcriptional regulator that plays a key role in stress response and exerts either positive or negative regulation of genes. Acts by interacting with the C-terminal domain of the alpha subunit of the RNA polymerase (RNAP). This interaction can enhance binding of RNAP to the promoter region of target genes and stimulate their transcription, or block interaction of RNAP with activator. This Lactiplantibacillus plantarum (strain ATCC BAA-793 / NCIMB 8826 / WCFS1) (Lactobacillus plantarum) protein is Global transcriptional regulator Spx.